The primary structure comprises 217 residues: 3,4-dihydroxy-2-butanone 4-phosphate synthase (217 aa).

Residues 37–38 (RE), Asp42, 150–154 (RGGHT), and Glu174 contribute to the D-ribulose 5-phosphate site. Glu38 provides a ligand contact to Mg(2+). Position 153 (His153) interacts with Mg(2+).

It belongs to the DHBP synthase family. As to quaternary structure, homodimer. The cofactor is Mg(2+). It depends on Mn(2+) as a cofactor.

The enzyme catalyses D-ribulose 5-phosphate = (2S)-2-hydroxy-3-oxobutyl phosphate + formate + H(+). The protein operates within cofactor biosynthesis; riboflavin biosynthesis; 2-hydroxy-3-oxobutyl phosphate from D-ribulose 5-phosphate: step 1/1. Catalyzes the conversion of D-ribulose 5-phosphate to formate and 3,4-dihydroxy-2-butanone 4-phosphate. This Escherichia coli O127:H6 (strain E2348/69 / EPEC) protein is 3,4-dihydroxy-2-butanone 4-phosphate synthase.